The sequence spans 502 residues: Probable cytosol aminopeptidase (502 aa).

Mn(2+)-binding residues include lysine 269 and aspartate 274. Lysine 281 is an active-site residue. Positions 292, 351, and 353 each coordinate Mn(2+). The active site involves arginine 355.

Belongs to the peptidase M17 family. Requires Mn(2+) as cofactor.

It is found in the cytoplasm. The catalysed reaction is Release of an N-terminal amino acid, Xaa-|-Yaa-, in which Xaa is preferably Leu, but may be other amino acids including Pro although not Arg or Lys, and Yaa may be Pro. Amino acid amides and methyl esters are also readily hydrolyzed, but rates on arylamides are exceedingly low.. It carries out the reaction Release of an N-terminal amino acid, preferentially leucine, but not glutamic or aspartic acids.. Functionally, presumably involved in the processing and regular turnover of intracellular proteins. Catalyzes the removal of unsubstituted N-terminal amino acids from various peptides. The polypeptide is Probable cytosol aminopeptidase (Shewanella denitrificans (strain OS217 / ATCC BAA-1090 / DSM 15013)).